Consider the following 144-residue polypeptide: Putative pre-16S rRNA nuclease (144 aa).

The protein belongs to the YqgF nuclease family.

It localises to the cytoplasm. Could be a nuclease involved in processing of the 5'-end of pre-16S rRNA. This is Putative pre-16S rRNA nuclease from Ralstonia nicotianae (strain ATCC BAA-1114 / GMI1000) (Ralstonia solanacearum).